A 182-amino-acid chain; its full sequence is Dual-action ribosomal maturation protein DarP (182 aa).

It belongs to the DarP family.

Its subcellular location is the cytoplasm. Functionally, member of a network of 50S ribosomal subunit biogenesis factors which assembles along the 30S-50S interface, preventing incorrect 23S rRNA structures from forming. Promotes peptidyl transferase center (PTC) maturation. The sequence is that of Dual-action ribosomal maturation protein DarP from Yersinia pseudotuberculosis serotype O:1b (strain IP 31758).